Reading from the N-terminus, the 87-residue chain is Omega-lycotoxin-Am1c (87 aa).

A signal peptide spans 1 to 17 (MKLSIFFVLFFIAIAYC). A propeptide spanning residues 18–40 (QPEFLDDEEDEVEETLPVAEEGR) is cleaved from the precursor. Disulfide bonds link C44–C59, C51–C64, C58–C84, and C66–C82.

The protein belongs to the neurotoxin omega-lctx family. Expressed by the venom gland.

The protein resides in the secreted. In terms of biological role, modulates Cav2.1/CACNA1A voltage-gated calcium channels (P/Q-type currents) in rat cerebellar Purkinje cells and hippocampal CA1-CA3 neurons. At saturating concentrations (&gt;10 nM) decelerates activation kinetics and slightly increases peak amplitude without affecting deactivation kinetics. In vivo, does not cause death when intravenously injected into mice. In rat models, through its activity on Cav2.1/CACNA1A, has an ameliorative effect on memory defects provoked by hyperstimulation of N-methyl-D-aspartate receptors (NMDARs) in the hippocampus. This Alopecosa marikovskyi (Wolf spider) protein is Omega-lycotoxin-Am1c.